We begin with the raw amino-acid sequence, 313 residues long: MGNELQHRTVLLDEAVDALVTRPDGVYVDGTFGRGGHSRAVLARLSDAGRLIAFDKDPRAIETASGIEDARFEIVHDSFAAMKGALDARGVGRVSGVLLDLGVSSPQVDDPERGFSFRANGPLDMRMDPTRGESAAEWLARASVQELTEVIRDYGEERFAFQIAKAIVARRAESDRLGPLDSTGELAQIVGHVVKTREKGKDPATRTFQAIRIHVNQELADLQVVLEAALSLLEQGGRLVVISFHSLEDRIVKRFLQTHASAPAVDRRLPIRAVDLPSPPLKLLGRMFPSDAEVAANPRARSAVMRIAERVAP.

S-adenosyl-L-methionine contacts are provided by residues 35–37, D55, F79, D100, and Q107; that span reads GGH.

It belongs to the methyltransferase superfamily. RsmH family.

It is found in the cytoplasm. It carries out the reaction cytidine(1402) in 16S rRNA + S-adenosyl-L-methionine = N(4)-methylcytidine(1402) in 16S rRNA + S-adenosyl-L-homocysteine + H(+). Its function is as follows. Specifically methylates the N4 position of cytidine in position 1402 (C1402) of 16S rRNA. This chain is Ribosomal RNA small subunit methyltransferase H, found in Burkholderia thailandensis (strain ATCC 700388 / DSM 13276 / CCUG 48851 / CIP 106301 / E264).